Consider the following 854-residue polypeptide: Translation initiation factor IF-2 (854 aa).

2 disordered regions span residues 52–79 and 128–265; these read RQHGEEGDNSQRITLQRKTTSTLSRDGG and RKQE…HGFQ. The span at 61 to 75 shows a compositional bias: polar residues; sequence SQRITLQRKTTSTLS. Composition is skewed to basic and acidic residues over residues 128 to 150 and 211 to 232; these read RKQEEEKAAKAKAEAEEKARQEA and VRHDNDKDKDKPRGRVNPDNKR. Basic residues predominate over residues 247-257; sequence RGKLGRKNKKP. The region spanning 354–523 is the tr-type G domain; it reads KRAPVVTVMG…LLQAEVLELT (170 aa). The G1 stretch occupies residues 363 to 370; that stretch reads GHVDHGKT. GTP is bound at residue 363-370; it reads GHVDHGKT. The tract at residues 388–392 is G2; the sequence is GITQH. The tract at residues 409-412 is G3; the sequence is DTPG. 409–413 provides a ligand contact to GTP; it reads DTPGH. A G4 region spans residues 463–466; sequence TKID. Residues 499–501 are G5; sequence SAK.

This sequence belongs to the TRAFAC class translation factor GTPase superfamily. Classic translation factor GTPase family. IF-2 subfamily.

It is found in the cytoplasm. In terms of biological role, one of the essential components for the initiation of protein synthesis. Protects formylmethionyl-tRNA from spontaneous hydrolysis and promotes its binding to the 30S ribosomal subunits. Also involved in the hydrolysis of GTP during the formation of the 70S ribosomal complex. In Marinomonas sp. (strain MWYL1), this protein is Translation initiation factor IF-2.